Reading from the N-terminus, the 532-residue chain is Neutral amino acid transporter A (532 aa).

Position 1 is an N-acetylmethionine (methionine 1). Residues 1–10 (MEKSNETNGY) are compositionally biased toward polar residues. The interval 1–25 (MEKSNETNGYLDSAQAGPAAGPGAP) is disordered. The Cytoplasmic segment spans residues 1–41 (MEKSNETNGYLDSAQAGPAAGPGAPGTAAGRARRCAGFLRR). The segment covering 14–25 (AQAGPAAGPGAP) has biased composition (low complexity). The next 3 helical transmembrane spans lie at 42–62 (QALV…GAAL), 88–108 (MIIL…LDAS), and 119–139 (AYFG…AFII). Residues 140–216 (KPGSGAQTLQ…VTHEKIPIGT (77 aa)) lie on the Extracellular side of the membrane. N-linked (GlcNAc...) asparagine glycans are attached at residues asparagine 201 and asparagine 206. A run of 6 helical transmembrane segments spans residues 217 to 237 (EIEG…GVAL), 257 to 277 (ATMV…MFLV), 298 to 318 (IFAS…LIYF), 328 to 348 (FLLG…SSAT), 373 to 393 (IGAT…AVFI), and 418 to 438 (VGAA…LEAI). Residues 500-532 (CKSEEETSPLVTHQNPAGPVASAPELESKESVL) are disordered. Residues serine 507, serine 527, and serine 530 each carry the phosphoserine modification.

It belongs to the dicarboxylate/amino acid:cation symporter (DAACS) (TC 2.A.23) family. SLC1A4 subfamily. Expressed mostly in brain, muscle, and pancreas but detected in all tissues examined.

The protein resides in the membrane. Its subcellular location is the melanosome. The enzyme catalyses L-threonine(in) + Na(+)(in) = L-threonine(out) + Na(+)(out). It catalyses the reaction L-serine(in) + Na(+)(in) = L-serine(out) + Na(+)(out). It carries out the reaction L-cysteine(in) + Na(+)(in) = L-cysteine(out) + Na(+)(out). The catalysed reaction is L-alanine(in) + Na(+)(in) = L-alanine(out) + Na(+)(out). The enzyme catalyses L-proline(in) + Na(+)(in) = L-proline(out) + Na(+)(out). It catalyses the reaction 4-hydroxy-L-proline(in) + Na(+)(in) = 4-hydroxy-L-proline(out) + Na(+)(out). In terms of biological role, sodium-dependent neutral amino-acid transporter that mediates transport of alanine, serine, cysteine, proline, hydroxyproline and threonine. This chain is Neutral amino acid transporter A, found in Homo sapiens (Human).